A 427-amino-acid polypeptide reads, in one-letter code: Glutamyl-tRNA reductase (427 aa).

Substrate is bound by residues 49–52, serine 101, 106–108, and glutamine 112; these read TCNR and EPQ. The active-site Nucleophile is the cysteine 50. 181–186 contributes to the NADP(+) binding site; sequence GAGETI. The segment at 407-427 is disordered; the sequence is FPATPGYRHPPVRPDDADPAP. Residues 418-427 are compositionally biased toward basic and acidic residues; the sequence is VRPDDADPAP.

It belongs to the glutamyl-tRNA reductase family. In terms of assembly, homodimer.

It catalyses the reaction (S)-4-amino-5-oxopentanoate + tRNA(Glu) + NADP(+) = L-glutamyl-tRNA(Glu) + NADPH + H(+). It functions in the pathway porphyrin-containing compound metabolism; protoporphyrin-IX biosynthesis; 5-aminolevulinate from L-glutamyl-tRNA(Glu): step 1/2. Functionally, catalyzes the NADPH-dependent reduction of glutamyl-tRNA(Glu) to glutamate 1-semialdehyde (GSA). This chain is Glutamyl-tRNA reductase, found in Stenotrophomonas maltophilia (strain R551-3).